Reading from the N-terminus, the 529-residue chain is Probable serine carboxypeptidase ARB_06414 (529 aa).

An N-terminal signal peptide occupies residues 1–19 (MRGLSYFVLALSAIDAAAA). Residues 171–191 (PTDDNPSRPVGTGFSQGKPSV) are disordered. Residue Ser-225 is part of the active site. N-linked (GlcNAc...) asparagine glycans are attached at residues Asn-284 and Asn-377. The active site involves Asp-434. N-linked (GlcNAc...) asparagine glycans are attached at residues Asn-440 and Asn-448. Residue His-503 is part of the active site.

Belongs to the peptidase S10 family.

The protein resides in the secreted. In terms of biological role, removes acidic, neutral and basic amino acids as well as proline from the C-terminal position. The chain is Probable serine carboxypeptidase ARB_06414 from Arthroderma benhamiae (strain ATCC MYA-4681 / CBS 112371) (Trichophyton mentagrophytes).